We begin with the raw amino-acid sequence, 549 residues long: Glucose-6-phosphate isomerase (549 aa).

Glu-355 acts as the Proton donor in catalysis. Active-site residues include His-386 and Lys-514.

The protein belongs to the GPI family.

The protein localises to the cytoplasm. It catalyses the reaction alpha-D-glucose 6-phosphate = beta-D-fructose 6-phosphate. Its pathway is carbohydrate biosynthesis; gluconeogenesis. It functions in the pathway carbohydrate degradation; glycolysis; D-glyceraldehyde 3-phosphate and glycerone phosphate from D-glucose: step 2/4. Functionally, catalyzes the reversible isomerization of glucose-6-phosphate to fructose-6-phosphate. The protein is Glucose-6-phosphate isomerase of Aeromonas salmonicida (strain A449).